The primary structure comprises 87 residues: uncharacterized protein (87 aa).

The chain crosses the membrane as a helical span at residues 13-33 (LMIVSAVFGGIGIITTIVFVI). The disordered stretch occupies residues 66 to 87 (EECGGSTETSSSKPKKKAKKEV). Residues 78–87 (KPKKKAKKEV) are compositionally biased toward basic residues.

Its subcellular location is the membrane. This is an uncharacterized protein from Caenorhabditis elegans.